The following is a 293-amino-acid chain: MKYFYIVTNRFKDPDGVNTRKIAHFLRSKGAECVCQIEQEKAFNKTGSYSDVRLVPNNTECVIVLGGDGTLIQASRELSEKDIPFIGVNIGTLGYLTDTDMSSFEETLESLLRDDYEIDRRMMLDGCIYRGEERIFSDMALNDVVINRNGALRIIDFDIYVNGEYLNTYSADGVIVSTATGSTAYSLSAGGPIIQPTARLIMVTPICPHSLNQRSIIFAADDEIMIEMKDNKSSSGRMTGSLKNDSARVATFDGESFCEVVTGDRIVITQSERISRFVKTSRISFLERIRNKM.

Asp-68 functions as the Proton acceptor in the catalytic mechanism. NAD(+) is bound by residues Asp-68–Gly-69, Asn-142–Asp-143, Arg-153, Asp-172, and Thr-183–Ser-188.

Belongs to the NAD kinase family. The cofactor is a divalent metal cation.

The protein localises to the cytoplasm. The enzyme catalyses NAD(+) + ATP = ADP + NADP(+) + H(+). Involved in the regulation of the intracellular balance of NAD and NADP, and is a key enzyme in the biosynthesis of NADP. Catalyzes specifically the phosphorylation on 2'-hydroxyl of the adenosine moiety of NAD to yield NADP. The chain is NAD kinase from Lachnospira eligens (strain ATCC 27750 / DSM 3376 / VPI C15-48 / C15-B4) (Eubacterium eligens).